Reading from the N-terminus, the 406-residue chain is MSASQDSRSRDNGPDGMEPEGVIESNWNEIVDSFDDMNLSESLLRGIYAYGFEKPSAIQQRAILPCIKGYDVIAQAQSGTGKTATFAISILQQIELDLKATQALVLAPTRELAQQIQKVVMALGDYMGASCHACIGGTNVRAEVQKLQMEAPHIIVGTPGRVFDMLNRRYLSPKYIKMFVLDEADEMLSRGFKDQIYDIFQKLNSNTQVVLLSATMPSDVLEVTKKFMRDPIRILVKKEELTLEGIRQFYINVEREEWKLDTLCDLYETLTITQAVIFINTRRKVDWLTEKMHARDFTASAMHGDMDQKERDVIMREFRSGSSRVLITTDLLARGIDVQQVSLVINYDLPTNRENYIHRIGRGGRFGRKGVAINMVTEEDKRTLRDIETFYNTSIEEMPLNVADLI.

Residues 1 to 21 (MSASQDSRSRDNGPDGMEPEG) are disordered. Ser2 carries the N-acetylserine modification. Position 4 is a phosphoserine (Ser4). The short motif at 32–60 (DSFDDMNLSESLLRGIYAYGFEKPSAIQQ) is the Q motif element. The region spanning 63–234 (ILPCIKGYDV…KKFMRDPIRI (172 aa)) is the Helicase ATP-binding domain. 76 to 83 (AQSGTGKT) is an ATP binding site. Position 118 is an N6-acetyllysine (Lys118). Lys146 participates in a covalent cross-link: Glycyl lysine isopeptide (Lys-Gly) (interchain with G-Cter in SUMO2). The residue at position 158 (Thr158) is a Phosphothreonine. Lys174 carries the post-translational modification N6-acetyllysine. The DEAD box motif lies at 182–185 (DEAD). N6-acetyllysine is present on Lys193. Lys225 is covalently cross-linked (Glycyl lysine isopeptide (Lys-Gly) (interchain with G-Cter in SUMO2)). Lys238 is subject to N6-acetyllysine; alternate. Residue Lys238 forms a Glycyl lysine isopeptide (Lys-Gly) (interchain with G-Cter in SUMO2); alternate linkage. In terms of domain architecture, Helicase C-terminal spans 245 to 406 (GIRQFYINVE…EMPLNVADLI (162 aa)). Glycyl lysine isopeptide (Lys-Gly) (interchain with G-Cter in SUMO2) cross-links involve residues Lys309, Lys369, and Lys381.

Belongs to the DEAD box helicase family. eIF4A subfamily. As to quaternary structure, eIF4F is a multi-subunit complex, the composition of which varies with external and internal environmental conditions. It is composed of at least EIF4A, EIF4E and EIF4G1/EIF4G3. Interacts with PAIP1, EIF4E and UPF2. Found in a complex with XPO7, EIF4A1, ARHGAP1, VPS26A, VPS29, VPS35 and SFN. May interact with NOM1. Interacts with PDCD4; this interferes with the interaction between EIF4A and EIF4G. Interacts with RBM4. Interacts with DDX3X in an RNA-independent manner. Interacts with PKP1 (via N-terminus); the interaction promotes EIF4A1 recruitment to the cap-dependent translation complex and EIF4A1 ATPase activity.

The protein localises to the cytoplasm. Its subcellular location is the perinuclear region. It localises to the cell membrane. It is found in the stress granule. The catalysed reaction is ATP + H2O = ADP + phosphate + H(+). Functionally, ATP-dependent RNA helicase which is a subunit of the eIF4F complex involved in cap recognition and is required for mRNA binding to ribosome. In the current model of translation initiation, eIF4A unwinds RNA secondary structures in the 5'-UTR of mRNAs which is necessary to allow efficient binding of the small ribosomal subunit, and subsequent scanning for the initiator codon. As a result, promotes cell proliferation and growth. The sequence is that of Eukaryotic initiation factor 4A-I (EIF4A1) from Macaca fascicularis (Crab-eating macaque).